We begin with the raw amino-acid sequence, 163 residues long: Cytochrome c-type biogenesis protein CcmE (163 aa).

Over 1–8 (MNPRRKKR) the chain is Cytoplasmic. A helical; Signal-anchor for type II membrane protein transmembrane segment spans residues 9–29 (LTLAVALIVGVAGAASLLLYA). The Periplasmic segment spans residues 30–163 (LNSNLNLFYT…QEGVEKTAQY (134 aa)). The heme site is built by His-131 and Tyr-135.

This sequence belongs to the CcmE/CycJ family.

It localises to the cell inner membrane. Heme chaperone required for the biogenesis of c-type cytochromes. Transiently binds heme delivered by CcmC and transfers the heme to apo-cytochromes in a process facilitated by CcmF and CcmH. The chain is Cytochrome c-type biogenesis protein CcmE from Shewanella denitrificans (strain OS217 / ATCC BAA-1090 / DSM 15013).